The primary structure comprises 836 residues: Serine/threonine-protein kinase ppk5 (836 aa).

4 disordered regions span residues 1-29, 192-214, 230-307, and 328-381; these read MVGLISTSETLPKQESKSSSAPVSNFLSP, INQLDETPGGTNYPMNKKKTLSS, CSQF…YKSI, and TPLD…ERQN. Polar residues-rich tracts occupy residues 192-205, 232-241, and 265-288; these read INQLDETPGGTNYP, QFASPRSSIV, and KPSNFNNNIQSSSYGHASQSTKLT. Basic and acidic residues predominate over residues 289–298; it reads SQRDNDHQKD. Basic residues predominate over residues 338–347; it reads SGKKFNKNSK. Residues 353–362 are compositionally biased toward low complexity; it reads STISSYSSAS. One can recognise a Protein kinase domain in the interval 518–814; it reads YEIIDTVGKG…VDSALQHEFI (297 aa). ATP is bound by residues 524–532 and K547; that span reads VGKGSFGQV. D644 serves as the catalytic Proton acceptor. Y678 carries the post-translational modification Phosphotyrosine.

The protein belongs to the protein kinase superfamily. CMGC Ser/Thr protein kinase family. MNB/DYRK subfamily.

It localises to the cytoplasm. The enzyme catalyses L-seryl-[protein] + ATP = O-phospho-L-seryl-[protein] + ADP + H(+). It carries out the reaction L-threonyl-[protein] + ATP = O-phospho-L-threonyl-[protein] + ADP + H(+). Its function is as follows. Has a role in meiosis. The polypeptide is Serine/threonine-protein kinase ppk5 (ppk5) (Schizosaccharomyces pombe (strain 972 / ATCC 24843) (Fission yeast)).